We begin with the raw amino-acid sequence, 398 residues long: S-adenosylmethionine synthase (398 aa).

Histidine 16 contacts ATP. Aspartate 18 lines the Mg(2+) pocket. Glutamate 44 is a binding site for K(+). Residues glutamate 57 and glutamine 100 each contribute to the L-methionine site. Residues 100–110 are flexible loop; that stretch reads QSPDIAQGVNE. Residues 175 to 177, 242 to 243, aspartate 251, 257 to 258, alanine 274, and lysine 278 contribute to the ATP site; these read DAK, RF, and RK. An L-methionine-binding site is contributed by aspartate 251. Lysine 282 contacts L-methionine.

Belongs to the AdoMet synthase family. As to quaternary structure, homotetramer; dimer of dimers. Requires Mg(2+) as cofactor. K(+) is required as a cofactor.

The protein localises to the cytoplasm. The catalysed reaction is L-methionine + ATP + H2O = S-adenosyl-L-methionine + phosphate + diphosphate. It participates in amino-acid biosynthesis; S-adenosyl-L-methionine biosynthesis; S-adenosyl-L-methionine from L-methionine: step 1/1. Catalyzes the formation of S-adenosylmethionine (AdoMet) from methionine and ATP. The overall synthetic reaction is composed of two sequential steps, AdoMet formation and the subsequent tripolyphosphate hydrolysis which occurs prior to release of AdoMet from the enzyme. The polypeptide is S-adenosylmethionine synthase (Streptococcus agalactiae serotype Ia (strain ATCC 27591 / A909 / CDC SS700)).